A 905-amino-acid chain; its full sequence is Methionine--tRNA ligase, cytoplasmic (905 aa).

The GST N-terminal domain maps to 1–75; it reads MKLFVGEGNP…YFYLSSGHDM (75 aa). One can recognise a GST C-terminal domain in the interval 72-199; that stretch reads GHDMCDLSNQ…DKGSSVFKPF (128 aa). Residues 271 to 281 carry the 'HIGH' region motif; it reads PYVNNVPHLGN. Positions 591–595 match the 'KMSKS' region motif; sequence KFSKS. Lys-594 provides a ligand contact to ATP. 2 disordered regions span residues 813–874 and 886–905; these read RFGG…VIDP and LALAEGKSPDPPTQKGKKKK. The span at 841 to 874 shows a compositional bias: basic and acidic residues; it reads GPERVKELMQELEKQGNHVRELKGKKAEKSVIDP. Residues 844–900 enclose the WHEP-TRS domain; that stretch reads RVKELMQELEKQGNHVRELKGKKAEKSVIDPEVQKLLALKKELALAEGKSPDPPTQK.

Belongs to the class-I aminoacyl-tRNA synthetase family. Monomer. Part of a multisubunit complex that groups tRNA ligases for Arg (RARS1), Asp (DARS1), Gln (QARS1), Ile (IARS1), Leu (LARS1), Lys (KARS1), Met (MARS1) the bifunctional ligase for Glu and Pro (EPRS1) and the auxiliary subunits AIMP1/p43, AIMP2/p38 and EEF1E1/p18.

It localises to the cytoplasm. It is found in the cytosol. The protein resides in the nucleus. Its subcellular location is the nucleolus. It carries out the reaction tRNA(Met) + L-methionine + ATP = L-methionyl-tRNA(Met) + AMP + diphosphate. In terms of biological role, catalyzes the specific attachment of an amino acid to its cognate tRNA in a 2 step reaction: the amino acid (AA) is first activated by ATP to form AA-AMP and then transferred to the acceptor end of the tRNA. Plays a role in the synthesis of ribosomal RNA in the nucleolus. This is Methionine--tRNA ligase, cytoplasmic (mars1) from Xenopus laevis (African clawed frog).